Here is a 643-residue protein sequence, read N- to C-terminus: 1-deoxy-D-xylulose-5-phosphate synthase (643 aa).

Thiamine diphosphate is bound by residues His78 and 119–121; that span reads AHS. Asp150 is a Mg(2+) binding site. Thiamine diphosphate-binding positions include 151-152, Asn179, Tyr288, and Glu370; that span reads GS. Asn179 lines the Mg(2+) pocket.

The protein belongs to the transketolase family. DXPS subfamily. In terms of assembly, homodimer. Mg(2+) is required as a cofactor. The cofactor is thiamine diphosphate.

The enzyme catalyses D-glyceraldehyde 3-phosphate + pyruvate + H(+) = 1-deoxy-D-xylulose 5-phosphate + CO2. It participates in metabolic intermediate biosynthesis; 1-deoxy-D-xylulose 5-phosphate biosynthesis; 1-deoxy-D-xylulose 5-phosphate from D-glyceraldehyde 3-phosphate and pyruvate: step 1/1. Catalyzes the acyloin condensation reaction between C atoms 2 and 3 of pyruvate and glyceraldehyde 3-phosphate to yield 1-deoxy-D-xylulose-5-phosphate (DXP). The chain is 1-deoxy-D-xylulose-5-phosphate synthase from Brucella melitensis biotype 2 (strain ATCC 23457).